The sequence spans 1090 residues: UPF0507 protein EC1118_1M3_1541g (1090 aa).

In terms of domain architecture, VPS9 spans 289-436 (FSVNQLLTDF…FEDFNKNTGN (148 aa)).

It belongs to the UPF0507 family.

The protein is UPF0507 protein EC1118_1M3_1541g of Saccharomyces cerevisiae (strain Lalvin EC1118 / Prise de mousse) (Baker's yeast).